The following is a 233-amino-acid chain: Small ribosomal subunit protein uS3 (233 aa).

Residues 39–107 (VRQYLTKELA…PAQINIAEVR (69 aa)) enclose the KH type-2 domain.

This sequence belongs to the universal ribosomal protein uS3 family. In terms of assembly, part of the 30S ribosomal subunit. Forms a tight complex with proteins S10 and S14.

Functionally, binds the lower part of the 30S subunit head. Binds mRNA in the 70S ribosome, positioning it for translation. The polypeptide is Small ribosomal subunit protein uS3 (Citrobacter koseri (strain ATCC BAA-895 / CDC 4225-83 / SGSC4696)).